A 445-amino-acid polypeptide reads, in one-letter code: Guanosine nucleotide diphosphate dissociation inhibitor 1 (445 aa).

It belongs to the Rab GDI family. Interacts with the GDP-bound form of RABA5C (via C-terminus). As to expression, expressed in roots, rosette leaves, stems, floral buds and siliques.

Functionally, regulates the GDP/GTP exchange reaction of most RAB proteins by inhibiting the dissociation of GDP from them, and the subsequent binding of GTP. In Arabidopsis thaliana (Mouse-ear cress), this protein is Guanosine nucleotide diphosphate dissociation inhibitor 1 (GDI1).